We begin with the raw amino-acid sequence, 298 residues long: Adaptation to cold protein C (298 aa).

Interacts with the C-terminal extension of AtcJ. Also interacts with AtcB, but not with AtcA.

Its activity is regulated as follows. Interaction with AtcJ stabilizes AtcC. Its function is as follows. Involved in cold adaptation. This Shewanella oneidensis (strain ATCC 700550 / JCM 31522 / CIP 106686 / LMG 19005 / NCIMB 14063 / MR-1) protein is Adaptation to cold protein C.